Consider the following 398-residue polypeptide: Succinate--CoA ligase [ADP-forming] subunit beta (398 aa).

Positions 9-254 (KAVLREFGVP…ESEEDAKEIE (246 aa)) constitute an ATP-grasp domain. Residues lysine 46, 53-55 (GRG), glutamate 109, serine 112, and glutamate 117 contribute to the ATP site. Residues asparagine 209 and aspartate 223 each contribute to the Mg(2+) site. Residues asparagine 274 and 331–333 (GIM) each bind substrate.

The protein belongs to the succinate/malate CoA ligase beta subunit family. In terms of assembly, heterotetramer of two alpha and two beta subunits. Requires Mg(2+) as cofactor.

It catalyses the reaction succinate + ATP + CoA = succinyl-CoA + ADP + phosphate. The enzyme catalyses GTP + succinate + CoA = succinyl-CoA + GDP + phosphate. It participates in carbohydrate metabolism; tricarboxylic acid cycle; succinate from succinyl-CoA (ligase route): step 1/1. Succinyl-CoA synthetase functions in the citric acid cycle (TCA), coupling the hydrolysis of succinyl-CoA to the synthesis of either ATP or GTP and thus represents the only step of substrate-level phosphorylation in the TCA. The beta subunit provides nucleotide specificity of the enzyme and binds the substrate succinate, while the binding sites for coenzyme A and phosphate are found in the alpha subunit. In Rhodopseudomonas palustris (strain HaA2), this protein is Succinate--CoA ligase [ADP-forming] subunit beta.